Consider the following 303-residue polypeptide: B1 kinase (303 aa).

It belongs to the protein kinase superfamily. Ser/Thr protein kinase family. Poxviruses subfamily. In terms of assembly, interacts with host JIP1; this interaction increases the amount of MAPK bound to JIP1 and subsequently increases the activity of transcription factors, such as JUN, that respond to these complexes. Interacts with protein OPG198; this interaction inhibits the repressive activity of OPG198 pseudokinase on viral replication factory formation. Mg(2+) is required as a cofactor. In terms of processing, autophosphorylated.

It localises to the virion. It is found in the host cytoplasm. It catalyses the reaction L-seryl-[protein] + ATP = O-phospho-L-seryl-[protein] + ADP + H(+). The enzyme catalyses L-threonyl-[protein] + ATP = O-phospho-L-threonyl-[protein] + ADP + H(+). In terms of biological role, essential serine/threonine-protein kinase that plays different role in the viral life cycle. Phosphorylates the host small ribosomal protein RACK1 thereby customizing the ribosomes to a state optimal for viral mRNAs (which contain poly-A leaders) but not for host mRNAs. Facilitates viral DNA replication by inhibiting host BANF1, a cellular host defense responsive to foreign DNA. Phosphorylates host BANF1 on serine and threonine residues; this leads to BANF1 relocalization to the cytoplasm, loss of dimerization and impaired DNA binding activity. Indeed, BANF1 activity depends on its DNA-binding property which is blocked by VPK1-mediated phosphorylation. Required for viral intermediate genes expression, probably by inhibiting host BANF1. Modulates cellular responses via host JUN by two different mechanisms, either by direct phosphorylation or by modulation of upstream JIP1-MAPK complexes. Seems to participate in the accumulation/processing of late proteins and thus in virion maturation. In addition, inhibits B12 repressive activity on viral DNA replication via a phosphorylation-dependent mechanism. This Cynomys gunnisoni (Gunnison's prairie dog) protein is B1 kinase (OPG187).